Reading from the N-terminus, the 707-residue chain is MGQHIASSESSTNGHVSLETNGDEKTDYSRWRLIDDQGRQSWRYLESDKERVDWPQTTYEKHFLGLDTELPDLTKAQTPLQAAQGAMSYFSQLQLPSGQWASECIGPLFILAFVVIAGYVTDTPLPAGYAVEIRRYLFARQCVADGGWGWHAEASESSAIGTVLSYVVLRLLGTTRDDPRLVRARTLLHEFGGATHAPGLAKFWLCILGVMKWECVNPFLPEFWLSPDSDPASPSKWYLHTRTNFTSMSYVWSKQWSYAGDAITEQLKAELYTQPYDTIDFAGHRSSLAAVDNNYPKWWLVNLMNWLTVAVYIPYFRKPATAESAERKVWDLIVTEDKNTEYIGLSPISKAANLVACYIHDGPDGSSVRAHRRTMGQYFWMTQDGMACNLSDGIQVWDTSLAVQALCAAGASSNPRFQSTLVKAHAFLADHQLLEDVQDQEKCHRWPRKGGWPFSTRYQGYMISECTGEGLRSAMQLQGISHLGLTQRIPEERLRDAVECLLNLQNDTGGFGVYEKRLGSPKLAWLEMGEFVGKTMVTYDYVECTTAAVSALLSFSKLHPNYRAAEIEATTAQGLGFIKQSQKPDGGWYGAWGVCFTYAGMFALETLALAGETYATSEASRRGCDFLLDKQKDDGGWGESYLSLQREEYVQHEESQVVQTAWVCMALMHAGYPGREPIKRGLRLIMSRQQSKGQWYQEALEGGVGDG.

Residues 1–20 (MGQHIASSESSTNGHVSLET) show a composition bias toward polar residues. A disordered region spans residues 1–22 (MGQHIASSESSTNGHVSLETNG). 4 PFTB repeats span residues 130–173 (AVEI…RLLG), 494–535 (LRDA…VGKT), 571–608 (TAQG…ETLA), and 620–661 (SRRG…VQTA).

The protein belongs to the terpene cyclase/mutase family.

The protein operates within secondary metabolite biosynthesis; terpenoid biosynthesis. Terpene cyclase/mutase; part of the gene cluster that mediates the biosynthesis of the meroterpenoids arthripenoids. The pathway begins with the HR-PKS atnH that catalyzes two chain-extension steps to form a reduced triketide, which then primes the SAT domain in the NR-PKS atnG to initiate three more cycles of extension to give a linear hexaketide corresponding to the polyketide part of arthripenoids. The FAD-dependent monooxygenase atnJ then performs an oxidative decarboxylation at C11 of the atnH/atnG product, via an electrophilic aromatic hydroxylation with concomitant ipso-decarboxylation. The membrane-bound polyprenyl transferase atnF then introduces a farnesyl group before the FAD-dependent monooxygenase atnK functions as the first epoxidase on terminal C12'-C13' olefin, followed by a second epoxidation on C7'-C8' catalyzed by atnA. The terpene cyclase/mutase atnI then initiates the sequential tricyclic ring formation through protonation of the terminal epoxide and catalyzes the regioselective and stereoselective 6/6/6-tricyclic ring formation. The cytochrome P450 monooxygenase atnM is responsible for hydroxylating both C1' and C10'. The next steps may involve ketoreduction and acetyl transfer by the ketoreductase atnB and the acetyltransferase atnC, and lead to the production of arthripenoid B, the final biosynthetic product of the atn cluster. The hydroquinone moiety in arthripenoid B is prone to undergo spontaneous oxidation to afford a benzoquinone compound, a key intermediate for generating structure diversity. For instance, addition of a cysteine followed by ring contraction gives arthripenoid A, tautomerization gives the main product arthripenoid C, addition of a molecular of water or amine affords arthripenoid D or E, respectively, and loss of one water forms arthripenoid F. The protein is Terpene cyclase/mutase atnI of Arthrinium sp.